A 65-amino-acid polypeptide reads, in one-letter code: Large ribosomal subunit protein bL35 (65 aa).

A compositionally biased stretch (basic residues) spans 1–16; the sequence is MPKQKTHRASAKRFKR. The tract at residues 1 to 20 is disordered; sequence MPKQKTHRASAKRFKRTGSG.

This sequence belongs to the bacterial ribosomal protein bL35 family.

In Streptococcus pyogenes serotype M1, this protein is Large ribosomal subunit protein bL35.